We begin with the raw amino-acid sequence, 36 residues long: Beta-amanitin proprotein (36 aa).

The propeptide occupies methionine 1–proline 10. Positions isoleucine 11–proline 18 form a cross-link, cyclopeptide (Ile-Pro). A cross-link (2'-cysteinyl-6'-hydroxytryptophan sulfoxide (Trp-Cys)) is located at residues tryptophan 12 to cysteine 16. A propeptide spanning residues cysteine 19–cysteine 36 is cleaved from the precursor.

It belongs to the MSDIN fungal toxin family. In terms of processing, processed by the macrocyclase-peptidase enzyme POPB to yield a toxic cyclic decapeptide. POPB first removes 10 residues from the N-terminus. Conformational trapping of the remaining peptide forces the enzyme to release this intermediate rather than proceed to macrocyclization. The enzyme rebinds the remaining peptide in a different conformation and catalyzes macrocyclization of the N-terminal 8 residues.

Its function is as follows. Toxin belonging to the bicyclic octapeptides amatoxins that acts by binding non-competitively to RNA polymerase II and greatly slowing the elongation of transcripts from target promoters. This Amanita phalloides (Death cap) protein is Beta-amanitin proprotein.